The sequence spans 370 residues: uncharacterized protein (370 aa).

The region spanning 62 to 293 is the OBG-type G domain; that stretch reads ATVALVGFPS…LKERMWRALG (232 aa). Residues 68-75, 114-118, and 243-246 each bind GTP; these read GFPSVGKS, DVPGL, and NKVD. The region spanning 293-368 is the TGS domain; that stretch reads GLIRIYMDKP…EDEDVLRVVA (76 aa).

It belongs to the TRAFAC class OBG-HflX-like GTPase superfamily. OBG GTPase family.

This is an uncharacterized protein from Halobacterium salinarum (strain ATCC 700922 / JCM 11081 / NRC-1) (Halobacterium halobium).